Consider the following 217-residue polypeptide: Deoxyribose-phosphate aldolase (217 aa).

The active-site Proton donor/acceptor is D89. The active-site Schiff-base intermediate with acetaldehyde is the K151. K180 (proton donor/acceptor) is an active-site residue.

Belongs to the DeoC/FbaB aldolase family. DeoC type 1 subfamily.

Its subcellular location is the cytoplasm. It carries out the reaction 2-deoxy-D-ribose 5-phosphate = D-glyceraldehyde 3-phosphate + acetaldehyde. It participates in carbohydrate degradation; 2-deoxy-D-ribose 1-phosphate degradation; D-glyceraldehyde 3-phosphate and acetaldehyde from 2-deoxy-alpha-D-ribose 1-phosphate: step 2/2. In terms of biological role, catalyzes a reversible aldol reaction between acetaldehyde and D-glyceraldehyde 3-phosphate to generate 2-deoxy-D-ribose 5-phosphate. This chain is Deoxyribose-phosphate aldolase, found in Metamycoplasma arthritidis (strain 158L3-1) (Mycoplasma arthritidis).